Here is a 277-residue protein sequence, read N- to C-terminus: S-formylglutathione hydrolase FrmB (277 aa).

Residues Ser-145, Asp-221, and His-254 each act as charge relay system in the active site.

This sequence belongs to the esterase D family.

It carries out the reaction S-formylglutathione + H2O = formate + glutathione + H(+). Its function is as follows. Serine hydrolase involved in the detoxification of formaldehyde. Hydrolyzes S-formylglutathione to glutathione and formate. The protein is S-formylglutathione hydrolase FrmB (frmB) of Escherichia coli (strain ATCC 8739 / DSM 1576 / NBRC 3972 / NCIMB 8545 / WDCM 00012 / Crooks).